A 639-amino-acid polypeptide reads, in one-letter code: Protein sly1 homolog (639 aa).

4 repeat units span residues Asp85–Ala121, Arg203–Gln245, Leu423–Lys460, and Gln464–Thr500. Residues Asp85–Thr500 form a 4 X approximate repeats region.

Belongs to the STXBP/unc-18/SEC1 family. In embryos, from stage 14, expression is seen in posterior midgut, esophagus and salivary glands. No expression is seen in larval imaginal disks.

Its subcellular location is the cytoplasm. It localises to the membrane. In terms of biological role, non-vital for development. The protein is Protein sly1 homolog (Slh) of Drosophila melanogaster (Fruit fly).